Here is a 107-residue protein sequence, read N- to C-terminus: UPF0060 membrane protein mll7841 (107 aa).

The next 4 helical transmembrane spans lie at 4–24 (LFYTAAALAEIAGCFSVWAWW), 30–50 (PLWLAPGFVSLLLFAWLLALV), 60–80 (AAYGGIYIAASLAWLWLVEGV), and 87–107 (LAGAALCIAGASLILLAPRGA).

This sequence belongs to the UPF0060 family.

It is found in the cell inner membrane. This Mesorhizobium japonicum (strain LMG 29417 / CECT 9101 / MAFF 303099) (Mesorhizobium loti (strain MAFF 303099)) protein is UPF0060 membrane protein mll7841.